The primary structure comprises 177 residues: ATP synthase subunit delta (177 aa).

This sequence belongs to the ATPase delta chain family. In terms of assembly, F-type ATPases have 2 components, F(1) - the catalytic core - and F(0) - the membrane proton channel. F(1) has five subunits: alpha(3), beta(3), gamma(1), delta(1), epsilon(1). F(0) has three main subunits: a(1), b(2) and c(10-14). The alpha and beta chains form an alternating ring which encloses part of the gamma chain. F(1) is attached to F(0) by a central stalk formed by the gamma and epsilon chains, while a peripheral stalk is formed by the delta and b chains.

It is found in the cell inner membrane. Its function is as follows. F(1)F(0) ATP synthase produces ATP from ADP in the presence of a proton or sodium gradient. F-type ATPases consist of two structural domains, F(1) containing the extramembraneous catalytic core and F(0) containing the membrane proton channel, linked together by a central stalk and a peripheral stalk. During catalysis, ATP synthesis in the catalytic domain of F(1) is coupled via a rotary mechanism of the central stalk subunits to proton translocation. Functionally, this protein is part of the stalk that links CF(0) to CF(1). It either transmits conformational changes from CF(0) to CF(1) or is implicated in proton conduction. This chain is ATP synthase subunit delta, found in Shigella flexneri.